A 432-amino-acid polypeptide reads, in one-letter code: Acyl-coenzyme A thioesterase 3 (432 aa).

Catalysis depends on charge relay system residues serine 243, aspartate 337, and histidine 371. The Microbody targeting signal motif lies at 430 to 432 (AKL).

The protein belongs to the C/M/P thioester hydrolase family. Widely expressed. Highly expressed in the kidney, expressed at low level in the liver. Isoform 2 is expressed in the kidney, but not in the liver. Isoform 1 is liver-specific. Highly expressed in kidney (at protein level).

The protein resides in the peroxisome. The enzyme catalyses hexadecanoyl-CoA + H2O = hexadecanoate + CoA + H(+). The catalysed reaction is decanoyl-CoA + H2O = decanoate + CoA + H(+). It catalyses the reaction dodecanoyl-CoA + H2O = dodecanoate + CoA + H(+). It carries out the reaction tetradecanoyl-CoA + H2O = tetradecanoate + CoA + H(+). The enzyme catalyses octadecanoyl-CoA + H2O = octadecanoate + CoA + H(+). The catalysed reaction is eicosanoyl-CoA + H2O = eicosanoate + CoA + H(+). It catalyses the reaction (9Z)-octadecenoyl-CoA + H2O = (9Z)-octadecenoate + CoA + H(+). It carries out the reaction (9Z,12Z)-octadecadienoyl-CoA + H2O = (9Z,12Z)-octadecadienoate + CoA + H(+). The enzyme catalyses (5Z,8Z,11Z,14Z)-eicosatetraenoyl-CoA + H2O = (5Z,8Z,11Z,14Z)-eicosatetraenoate + CoA + H(+). The catalysed reaction is tetracosanoyl-CoA + H2O = tetracosanoate + CoA + H(+). It catalyses the reaction hexacosanoyl-CoA + H2O = hexacosanoate + CoA + H(+). It carries out the reaction docosanoyl-CoA + H2O = docosanoate + CoA + H(+). The enzyme catalyses (9Z)-hexadecenoyl-CoA + H2O = (9Z)-hexadecenoate + CoA + H(+). Its pathway is lipid metabolism; fatty acid metabolism. Functionally, catalyzes the hydrolysis of acyl-CoAs into free fatty acids and coenzyme A (CoASH), regulating their respective intracellular levels. Mainly active on long-chain acyl-CoAs. May have a function in termination of beta-oxidation of fatty acids. This Mus musculus (Mouse) protein is Acyl-coenzyme A thioesterase 3 (Acot3).